We begin with the raw amino-acid sequence, 381 residues long: MYG1 exonuclease (381 aa).

Residues 1 to 47 (MGRGFLRGVLTLLPLRSVLQVQHCMLVSEPDLPPKRPRNNLMAPPRI) constitute a mitochondrion transit peptide. Lysine 267 and lysine 273 each carry N6-acetyllysine.

Belongs to the MYG1 family.

The protein resides in the nucleus. It localises to the nucleoplasm. It is found in the mitochondrion matrix. The protein localises to the nucleolus. 3'-5' RNA exonuclease which cleaves in situ on specific transcripts in both nucleus and mitochondrion. Involved in regulating spatially segregated organellar RNA processing, acts as a coordinator of nucleo-mitochondrial crosstalk. In nucleolus, processes pre-ribosomal RNA involved in ribosome assembly and alters cytoplasmic translation. In mitochondrial matrix, processes 3'-termini of the mito-ribosomal and messenger RNAs and controls translation of mitochondrial proteins. This chain is MYG1 exonuclease, found in Rattus norvegicus (Rat).